A 1399-amino-acid chain; its full sequence is DNA-directed RNA polymerase subunit beta' (1399 aa).

C70, C72, C85, and C88 together coordinate Zn(2+). Residues D460, D462, and D464 each coordinate Mg(2+). Residues C814, C888, C895, and C898 each coordinate Zn(2+).

The protein belongs to the RNA polymerase beta' chain family. As to quaternary structure, the RNAP catalytic core consists of 2 alpha, 1 beta, 1 beta' and 1 omega subunit. When a sigma factor is associated with the core the holoenzyme is formed, which can initiate transcription. Mg(2+) serves as cofactor. Requires Zn(2+) as cofactor.

The catalysed reaction is RNA(n) + a ribonucleoside 5'-triphosphate = RNA(n+1) + diphosphate. DNA-dependent RNA polymerase catalyzes the transcription of DNA into RNA using the four ribonucleoside triphosphates as substrates. This chain is DNA-directed RNA polymerase subunit beta', found in Pseudomonas putida (strain GB-1).